A 324-amino-acid chain; its full sequence is Acetyl-coenzyme A carboxylase carboxyl transferase subunit alpha (324 aa).

Residues 44–298 (ILQRKLLNLK…KNKIRDQLDF (255 aa)) enclose the CoA carboxyltransferase C-terminal domain.

This sequence belongs to the AccA family. Acetyl-CoA carboxylase is a heterohexamer composed of biotin carboxyl carrier protein (accB), biotin carboxylase (accC) and two subunits each of ACCase subunit alpha (accA) and ACCase subunit beta (accD).

Its subcellular location is the plastid. The protein localises to the chloroplast. It catalyses the reaction N(6)-carboxybiotinyl-L-lysyl-[protein] + acetyl-CoA = N(6)-biotinyl-L-lysyl-[protein] + malonyl-CoA. It functions in the pathway lipid metabolism; malonyl-CoA biosynthesis; malonyl-CoA from acetyl-CoA: step 1/1. Its function is as follows. Component of the acetyl coenzyme A carboxylase (ACC) complex. First, biotin carboxylase catalyzes the carboxylation of biotin on its carrier protein (BCCP) and then the CO(2) group is transferred by the carboxyltransferase to acetyl-CoA to form malonyl-CoA. This chain is Acetyl-coenzyme A carboxylase carboxyl transferase subunit alpha, found in Cyanidium caldarium (Red alga).